Reading from the N-terminus, the 175-residue chain is Disulfide bond formation protein B (175 aa).

The Cytoplasmic segment spans residues methionine 1–serine 13. A helical transmembrane segment spans residues tryptophan 14–tyrosine 30. Topologically, residues phenylalanine 31–leucine 48 are periplasmic. The cysteines at positions 40 and 43 are disulfide-linked. A helical membrane pass occupies residues alanine 49–proline 64. At lysine 65–isoleucine 71 the chain is on the cytoplasmic side. The helical transmembrane segment at leucine 72–leucine 89 threads the bilayer. The Periplasmic segment spans residues alanine 90 to glutamate 144. A disulfide bond links cysteine 104 and cysteine 130. The helical transmembrane segment at tryptophan 145–proline 163 threads the bilayer. Residues isoleucine 164–lysine 175 lie on the Cytoplasmic side of the membrane.

The protein belongs to the DsbB family.

Its subcellular location is the cell inner membrane. Its function is as follows. Required for disulfide bond formation in some periplasmic proteins. Acts by oxidizing the DsbA protein. This Shewanella sp. (strain W3-18-1) protein is Disulfide bond formation protein B.